The chain runs to 54 residues: Large ribosomal subunit protein bL33C (54 aa).

The protein belongs to the bacterial ribosomal protein bL33 family.

The chain is Large ribosomal subunit protein bL33C from Streptomyces griseus subsp. griseus (strain JCM 4626 / CBS 651.72 / NBRC 13350 / KCC S-0626 / ISP 5235).